The primary structure comprises 294 residues: Lysozyme M1 (294 aa).

In terms of domain architecture, Ch-type lysozyme spans 81 to 294; that stretch reads GVQGIDVSHW…RLLALANNTA (214 aa). Active-site residues include Asp86, Asp175, and Glu177. The cysteines at positions 185 and 224 are disulfide-linked.

The protein belongs to the glycosyl hydrolase 25 family.

It localises to the secreted. It catalyses the reaction Hydrolysis of (1-&gt;4)-beta-linkages between N-acetylmuramic acid and N-acetyl-D-glucosamine residues in a peptidoglycan and between N-acetyl-D-glucosamine residues in chitodextrins.. In terms of biological role, this enzyme has both lysozyme (acetylmuramidase) and diacetylmuramidase activities. The protein is Lysozyme M1 (acm) of Streptomyces globisporus.